A 51-amino-acid chain; its full sequence is Ribosome biogenesis protein Nop10 (51 aa).

The protein belongs to the NOP10 family.

In terms of biological role, involved in ribosome biogenesis; more specifically in 18S rRNA pseudouridylation and in cleavage of pre-rRNA. The chain is Ribosome biogenesis protein Nop10 from Nitrosopumilus maritimus (strain SCM1).